We begin with the raw amino-acid sequence, 155 residues long: Xanthine-guanine phosphoribosyltransferase (155 aa).

Residues arginine 37 to glycine 38, arginine 69, and glutamate 90 to threonine 98 contribute to the 5-phospho-alpha-D-ribose 1-diphosphate site. Arginine 69 provides a ligand contact to GMP. Aspartate 91 contacts Mg(2+). Aspartate 94 and isoleucine 137 together coordinate guanine. Xanthine-binding residues include aspartate 94 and isoleucine 137. GMP contacts are provided by residues aspartate 94–threonine 98 and tryptophan 136–isoleucine 137.

It belongs to the purine/pyrimidine phosphoribosyltransferase family. XGPT subfamily. Homotetramer. The cofactor is Mg(2+).

The protein localises to the cell inner membrane. The catalysed reaction is GMP + diphosphate = guanine + 5-phospho-alpha-D-ribose 1-diphosphate. It catalyses the reaction XMP + diphosphate = xanthine + 5-phospho-alpha-D-ribose 1-diphosphate. It carries out the reaction IMP + diphosphate = hypoxanthine + 5-phospho-alpha-D-ribose 1-diphosphate. The protein operates within purine metabolism; GMP biosynthesis via salvage pathway; GMP from guanine: step 1/1. It functions in the pathway purine metabolism; XMP biosynthesis via salvage pathway; XMP from xanthine: step 1/1. In terms of biological role, purine salvage pathway enzyme that catalyzes the transfer of the ribosyl-5-phosphate group from 5-phospho-alpha-D-ribose 1-diphosphate (PRPP) to the N9 position of the 6-oxopurines guanine and xanthine to form the corresponding ribonucleotides GMP (guanosine 5'-monophosphate) and XMP (xanthosine 5'-monophosphate), with the release of PPi. To a lesser extent, also acts on hypoxanthine. The sequence is that of Xanthine-guanine phosphoribosyltransferase from Aeromonas hydrophila subsp. hydrophila (strain ATCC 7966 / DSM 30187 / BCRC 13018 / CCUG 14551 / JCM 1027 / KCTC 2358 / NCIMB 9240 / NCTC 8049).